The chain runs to 190 residues: Imidazoleglycerol-phosphate dehydratase (190 aa).

Belongs to the imidazoleglycerol-phosphate dehydratase family.

The protein resides in the cytoplasm. It carries out the reaction D-erythro-1-(imidazol-4-yl)glycerol 3-phosphate = 3-(imidazol-4-yl)-2-oxopropyl phosphate + H2O. Its pathway is amino-acid biosynthesis; L-histidine biosynthesis; L-histidine from 5-phospho-alpha-D-ribose 1-diphosphate: step 6/9. This is Imidazoleglycerol-phosphate dehydratase from Nitratiruptor sp. (strain SB155-2).